Here is a 230-residue protein sequence, read N- to C-terminus: Large ribosomal subunit protein uL3 (230 aa).

Disordered regions lie at residues Gln-125–Asp-149 and Pro-210–Glu-230.

Belongs to the universal ribosomal protein uL3 family. As to quaternary structure, part of the 50S ribosomal subunit. Forms a cluster with proteins L14 and L19.

In terms of biological role, one of the primary rRNA binding proteins, it binds directly near the 3'-end of the 23S rRNA, where it nucleates assembly of the 50S subunit. The protein is Large ribosomal subunit protein uL3 of Mesomycoplasma hyopneumoniae (strain 232) (Mycoplasma hyopneumoniae).